The chain runs to 390 residues: Bibenzyl synthase (390 aa).

The active site involves C164.

This sequence belongs to the thiolase-like superfamily. Chalcone/stilbene synthases family.

It carries out the reaction 3-(3-hydroxyphenyl)-propanoyl-CoA + 3 malonyl-CoA + 3 H(+) = 3,3',5-trihydroxybibenzyl + 4 CO2 + 4 CoA. This Phalaenopsis sp. (Moth orchid) protein is Bibenzyl synthase (BIBSY212).